The chain runs to 131 residues: MAAAVAMETDDAGNRLRFQLELEFVQCLANPNYLNFLAQRGYFKDKAFVNYLKYLLYWKDPEYAKYLKYPQCLHMLELLQYEHFRKELVNAQCAKFIDEQQILHWQHYSRKRMRLQQALAEQQQQNNTSGK.

An N-acetylalanine modification is found at Ala-2.

It belongs to the Mediator complex subunit 31 family. Component of the Mediator complex, which is composed of MED1, MED4, MED6, MED7, MED8, MED9, MED10, MED11, MED12, MED13, MED13L, MED14, MED15, MED16, MED17, MED18, MED19, MED20, MED21, MED22, MED23, MED24, MED25, MED26, MED27, MED29, MED30, MED31, CCNC, CDK8 and CDC2L6/CDK11. The MED12, MED13, CCNC and CDK8 subunits form a distinct module termed the CDK8 module. Mediator containing the CDK8 module is less active than Mediator lacking this module in supporting transcriptional activation. Individual preparations of the Mediator complex lacking one or more distinct subunits have been variously termed ARC, CRSP, DRIP, PC2, SMCC and TRAP.

The protein localises to the nucleus. Component of the Mediator complex, a coactivator involved in the regulated transcription of nearly all RNA polymerase II-dependent genes. Mediator functions as a bridge to convey information from gene-specific regulatory proteins to the basal RNA polymerase II transcription machinery. Mediator is recruited to promoters by direct interactions with regulatory proteins and serves as a scaffold for the assembly of a functional preinitiation complex with RNA polymerase II and the general transcription factors. This Homo sapiens (Human) protein is Mediator of RNA polymerase II transcription subunit 31 (MED31).